The following is a 365-amino-acid chain: 3-isopropylmalate dehydrogenase (365 aa).

80–91 serves as a coordination point for NAD(+); that stretch reads GPKWGTGSVRPE. The substrate site is built by arginine 98, arginine 108, arginine 137, and aspartate 226. Mg(2+)-binding residues include aspartate 226, aspartate 251, and aspartate 255. 290–301 lines the NAD(+) pocket; that stretch reads GSAPDLPKGKVN.

It belongs to the isocitrate and isopropylmalate dehydrogenases family. As to quaternary structure, homodimer. Mg(2+) serves as cofactor. Requires Mn(2+) as cofactor.

The protein resides in the cytoplasm. It catalyses the reaction (2R,3S)-3-isopropylmalate + NAD(+) = 4-methyl-2-oxopentanoate + CO2 + NADH. Its pathway is amino-acid biosynthesis; L-leucine biosynthesis; L-leucine from 3-methyl-2-oxobutanoate: step 3/4. In terms of biological role, catalyzes the oxidation of 3-carboxy-2-hydroxy-4-methylpentanoate (3-isopropylmalate) to 3-carboxy-4-methyl-2-oxopentanoate. The product decarboxylates to 4-methyl-2 oxopentanoate. The chain is 3-isopropylmalate dehydrogenase (LEU2) from Maudiozyma exigua (Yeast).